Reading from the N-terminus, the 425-residue chain is Light-independent protochlorophyllide reductase subunit N (425 aa).

Residues Cys-17, Cys-42, and Cys-103 each coordinate [4Fe-4S] cluster.

This sequence belongs to the BchN/ChlN family. As to quaternary structure, protochlorophyllide reductase is composed of three subunits; ChlL, ChlN and ChlB. Forms a heterotetramer of two ChlB and two ChlN subunits. It depends on [4Fe-4S] cluster as a cofactor.

It catalyses the reaction chlorophyllide a + oxidized 2[4Fe-4S]-[ferredoxin] + 2 ADP + 2 phosphate = protochlorophyllide a + reduced 2[4Fe-4S]-[ferredoxin] + 2 ATP + 2 H2O. The protein operates within porphyrin-containing compound metabolism; chlorophyll biosynthesis (light-independent). In terms of biological role, component of the dark-operative protochlorophyllide reductase (DPOR) that uses Mg-ATP and reduced ferredoxin to reduce ring D of protochlorophyllide (Pchlide) to form chlorophyllide a (Chlide). This reaction is light-independent. The NB-protein (ChlN-ChlB) is the catalytic component of the complex. In Synechococcus sp. (strain CC9605), this protein is Light-independent protochlorophyllide reductase subunit N.